Reading from the N-terminus, the 122-residue chain is UPF0482 protein Spro_2288 (122 aa).

The signal sequence occupies residues 1 to 31 (MKTLSTQRLLRGMLPVAMLMLMGAWQAPALA). Positions 46–71 (SNSGAMSTEAARQSKQQFNDTKSLRN) are disordered.

It belongs to the UPF0482 family.

The protein is UPF0482 protein Spro_2288 of Serratia proteamaculans (strain 568).